The primary structure comprises 596 residues: Probable ATP-dependent RNA helicase DDX52 (596 aa).

The residue at position 15 (K15) is an N6-acetyllysine. S39 is modified (phosphoserine). A disordered region spans residues 68–94 (LPDEEKTEESQIERKKQNRKKKKITSE). Positions 163-191 (QLDQEYKINSRLLQNILDAGFQTPTPIQM) match the Q motif motif. One can recognise a Helicase ATP-binding domain in the interval 194-372 (IPVMLHGREL…RLNLDSVITV (179 aa)). 207–214 (APTGSGKT) is a binding site for ATP. A DEAD box motif is present at residues 316–319 (DESD). The region spanning 383 to 544 (TVEQELLFVG…PVPEYIKGFQ (162 aa)) is the Helicase C-terminal domain. The tract at residues 575–596 (AKDKRKKVTGQNKKKVAPEDKS) is disordered. The segment covering 577–589 (DKRKKVTGQNKKK) has biased composition (basic residues).

The protein belongs to the DEAD box helicase family. DDX52/ROK1 subfamily.

The protein localises to the nucleus. It localises to the nucleolus. It catalyses the reaction ATP + H2O = ADP + phosphate + H(+). This is Probable ATP-dependent RNA helicase DDX52 (DDX52) from Bos taurus (Bovine).